A 131-amino-acid polypeptide reads, in one-letter code: Small ribosomal subunit protein uS8 (131 aa).

It belongs to the universal ribosomal protein uS8 family. In terms of assembly, part of the 30S ribosomal subunit. Contacts proteins S5 and S12.

One of the primary rRNA binding proteins, it binds directly to 16S rRNA central domain where it helps coordinate assembly of the platform of the 30S subunit. This Geobacillus stearothermophilus (Bacillus stearothermophilus) protein is Small ribosomal subunit protein uS8.